We begin with the raw amino-acid sequence, 460 residues long: Truncated surface protein (460 aa).

The N-terminal stretch at 1 to 31 (MRVKEIQRNYQHLWKWSLIILGMIMICKAIE) is a signal peptide. C53 and C73 are oxidised to a cystine. Residues N87, N135, N139, N148, N177, N180, N181, N194, N231, N238, N259, N273, N286, and N292 are each glycosylated (N-linked (GlcNAc...) asparagine; by host). 5 cysteine pairs are disulfide-bonded: C118-C202, C125-C193, C130-C149, C215-C244, and C225-C236. The interval 130–148 (CIDVKNSTNNNTEEATITN) is V1. The tract at residues 149–193 (CSFKVPTELKDKTETVHTLFYKLDVVPLNVTNNSSISSTYRLINC) is V2. The segment at 293 to 325 (CTRPGSDKKIRQSIRIGPGKVFYAKGGITGQAH) is V3. C293 and C326 are joined by a disulfide. Residues N327, N350, and N356 are each glycosylated (N-linked (GlcNAc...) asparagine; by host). The interval 358 to 368 (SSGGDIEITTH) is CD4-binding loop. Intrachain disulfides connect C372/C439, C379/C412, and C397/C404. Positions 379–412 (CNTSELFTGIWNGTWDKNCTSTESNCTGNITLPC) are V4. Residues N380, N390, N396, N403, N407, and N442 are each glycosylated (N-linked (GlcNAc...) asparagine; by host).

The protein resides in the virion membrane. The chain is Truncated surface protein (env) from Human immunodeficiency virus type 1 group M subtype U (isolate Z3) (HIV-1).